Consider the following 309-residue polypeptide: MALRLSFMGTPDFSVPILHALLDAGHDVVAVYSQPPRPAGRRRLKLIPSPVQNAAEERSIPTFTPQTLKTAEQQAQFAALSVDAAIVVAYGLLLPKAILETPRFGCFNAHASLLPRWRGAAPIQRAIMAGDKETGMMIMKMDEGLDTGSIVLSRSIPITDTTTTDKLSNELSYIGAELMIETLSTLEKGQLKLIPQSKEGITYAAKIKKEETRIDWKKPAEFIHRHIRALSPSPGCWCNMNIGGREERVKILESRLATGTSLEIGRIEPNSLIVHCGQGRIEITTLQRSGGKILDSATFLRGAHISAVF.

Residue Ser-112 to Pro-115 coordinates (6S)-5,6,7,8-tetrahydrofolate.

This sequence belongs to the Fmt family.

It catalyses the reaction L-methionyl-tRNA(fMet) + (6R)-10-formyltetrahydrofolate = N-formyl-L-methionyl-tRNA(fMet) + (6S)-5,6,7,8-tetrahydrofolate + H(+). Functionally, attaches a formyl group to the free amino group of methionyl-tRNA(fMet). The formyl group appears to play a dual role in the initiator identity of N-formylmethionyl-tRNA by promoting its recognition by IF2 and preventing the misappropriation of this tRNA by the elongation apparatus. In Bartonella tribocorum (strain CIP 105476 / IBS 506), this protein is Methionyl-tRNA formyltransferase.